The sequence spans 292 residues: Elongation factor Ts (292 aa).

Positions Thr82–Val85 are involved in Mg(2+) ion dislocation from EF-Tu.

The protein belongs to the EF-Ts family.

Its subcellular location is the cytoplasm. Its function is as follows. Associates with the EF-Tu.GDP complex and induces the exchange of GDP to GTP. It remains bound to the aminoacyl-tRNA.EF-Tu.GTP complex up to the GTP hydrolysis stage on the ribosome. The chain is Elongation factor Ts from Legionella pneumophila subsp. pneumophila (strain Philadelphia 1 / ATCC 33152 / DSM 7513).